Reading from the N-terminus, the 277-residue chain is Nuclear egress protein 2 (277 aa).

The Perinuclear space portion of the chain corresponds to 1–250 (MEVIPNINSR…ASGECVTTIR (250 aa)). A helical transmembrane segment spans residues 251-271 (IPRYIVMLWIFSVLLAMVTWG). Topologically, residues 272–277 (SYRLYS) are nuclear.

It belongs to the herpesviridae NEC2 protein family. In terms of assembly, forms a heterohexameric complex with NEC1. In terms of processing, phosphorylated.

The protein localises to the host nucleus inner membrane. In terms of biological role, plays an essential role in virion nuclear egress, the first step of virion release from infected cell. Within the host nucleus, NEC1 interacts with the newly formed capsid through the vertexes and directs it to the inner nuclear membrane by associating with NEC2. Induces the budding of the capsid at the inner nuclear membrane as well as its envelopment into the perinuclear space. There, the NEC1/NEC2 complex promotes the fusion of the enveloped capsid with the outer nuclear membrane and the subsequent release of the viral capsid into the cytoplasm where it will reach the secondary budding sites in the host Golgi or trans-Golgi network. The sequence is that of Nuclear egress protein 2 from Gallid herpesvirus 2 (strain Chicken/Md5/ATCC VR-987) (GaHV-2).